The following is a 551-amino-acid chain: NAD(P)H-quinone oxidoreductase chain 4 (551 aa).

Helical transmembrane passes span 25 to 45 (FPWL…VPFI), 56 to 76 (WFAL…YLNG), 111 to 131 (LILL…PVTF), 133 to 153 (PKLF…VFAV), 157 to 177 (LLFF…LAIW), 189 to 209 (FILY…AMGF), 233 to 253 (LLCY…VPLH), 264 to 284 (TAPV…YALM), 298 to 318 (FAPL…LTSF), 335 to 355 (MGFV…GAML), 356 to 376 (QMIS…ATYD), 397 to 417 (FALW…SGFV), 438 to 458 (IVID…LLSM), and 485 to 505 (VYII…PRLM).

It belongs to the complex I subunit 4 family.

It is found in the cellular thylakoid membrane. It catalyses the reaction a plastoquinone + NADH + (n+1) H(+)(in) = a plastoquinol + NAD(+) + n H(+)(out). The catalysed reaction is a plastoquinone + NADPH + (n+1) H(+)(in) = a plastoquinol + NADP(+) + n H(+)(out). Functionally, NDH-1 shuttles electrons from NAD(P)H, via FMN and iron-sulfur (Fe-S) centers, to quinones in the respiratory chain. The immediate electron acceptor for the enzyme in this species is believed to be plastoquinone. Couples the redox reaction to proton translocation (for every two electrons transferred, four hydrogen ions are translocated across the cytoplasmic membrane), and thus conserves the redox energy in a proton gradient. This Synechococcus sp. (strain WH7803) protein is NAD(P)H-quinone oxidoreductase chain 4.